Reading from the N-terminus, the 107-residue chain is Guanylate cyclase activator 2B (107 aa).

Positions 1 to 21 (MSGSQLWAAVVVLLLLQSAQG) are cleaved as a signal peptide. Positions 22–92 (VYIKYHGFQV…STFKALRTIA (71 aa)) are excised as a propeptide. 3 disulfides stabilise this stretch: cysteine 63-cysteine 76, cysteine 96-cysteine 104, and cysteine 99-cysteine 107.

It belongs to the guanylin family.

It is found in the secreted. In terms of biological role, endogenous activator of intestinal guanylate cyclase. It stimulates this enzyme through the same receptor binding region as the heat-stable enterotoxins. May be a potent physiological regulator of intestinal fluid and electrolyte transport. May be an autocrine/paracrine regulator of intestinal salt and water transport. The protein is Guanylate cyclase activator 2B (GUCA2B) of Notomys alexis (Spinifex hopping mouse).